We begin with the raw amino-acid sequence, 433 residues long: Serine hydroxymethyltransferase (433 aa).

Residues Leu132 and Gly136 to Leu138 contribute to the (6S)-5,6,7,8-tetrahydrofolate site. An N6-(pyridoxal phosphate)lysine modification is found at Lys241.

The protein belongs to the SHMT family. In terms of assembly, homodimer. Pyridoxal 5'-phosphate serves as cofactor.

Its subcellular location is the cytoplasm. It catalyses the reaction (6R)-5,10-methylene-5,6,7,8-tetrahydrofolate + glycine + H2O = (6S)-5,6,7,8-tetrahydrofolate + L-serine. Its pathway is one-carbon metabolism; tetrahydrofolate interconversion. It participates in amino-acid biosynthesis; glycine biosynthesis; glycine from L-serine: step 1/1. Its function is as follows. Catalyzes the reversible interconversion of serine and glycine with tetrahydrofolate (THF) serving as the one-carbon carrier. This reaction serves as the major source of one-carbon groups required for the biosynthesis of purines, thymidylate, methionine, and other important biomolecules. Also exhibits THF-independent aldolase activity toward beta-hydroxyamino acids, producing glycine and aldehydes, via a retro-aldol mechanism. The sequence is that of Serine hydroxymethyltransferase from Bradyrhizobium sp. (strain ORS 278).